A 355-amino-acid polypeptide reads, in one-letter code: dTDP-glucose 4,6-dehydratase (355 aa).

NAD(+) contacts are provided by residues 12–13, 33–36, 59–60, 81–85, and Thr-100; these read FI, DKLT, DI, and LAAES. Substrate is bound at residue Ser-85. Position 134 (Thr-134) interacts with substrate. The active-site Proton donor is Asp-135. Residues Glu-136 and Tyr-160 each act as proton acceptor in the active site. NAD(+) is bound at residue 160–164; it reads YSASK. Asn-189 serves as a coordination point for substrate. Asn-190 provides a ligand contact to NAD(+). Substrate is bound by residues 199–200, 215–217, Arg-224, Asn-259, and 293–297; these read KL, PVY, and DRPGH.

Belongs to the NAD(P)-dependent epimerase/dehydratase family. dTDP-glucose dehydratase subfamily. Homodimer. Requires NAD(+) as cofactor.

It catalyses the reaction dTDP-alpha-D-glucose = dTDP-4-dehydro-6-deoxy-alpha-D-glucose + H2O. It functions in the pathway carbohydrate biosynthesis; dTDP-L-rhamnose biosynthesis. Its pathway is bacterial outer membrane biogenesis; LPS O-antigen biosynthesis. In terms of biological role, catalyzes the dehydration of dTDP-D-glucose to form dTDP-6-deoxy-D-xylo-4-hexulose via a three-step process involving oxidation, dehydration and reduction. The protein is dTDP-glucose 4,6-dehydratase (rfbB1) of Neisseria meningitidis serogroup B (strain ATCC BAA-335 / MC58).